The following is a 101-amino-acid chain: NAD(P)H-quinone oxidoreductase subunit 4L, chloroplastic (101 aa).

3 helical membrane-spanning segments follow: residues 2–22 (IFQSYLLIAASMFCIGLYGLL), 32–52 (MSLELLLNAVNLNLLTFSNFV), and 61–81 (VLALFVIALAAAEAAIGLAII).

Belongs to the complex I subunit 4L family. In terms of assembly, NDH is composed of at least 16 different subunits, 5 of which are encoded in the nucleus.

Its subcellular location is the plastid. The protein localises to the chloroplast thylakoid membrane. It carries out the reaction a plastoquinone + NADH + (n+1) H(+)(in) = a plastoquinol + NAD(+) + n H(+)(out). It catalyses the reaction a plastoquinone + NADPH + (n+1) H(+)(in) = a plastoquinol + NADP(+) + n H(+)(out). In terms of biological role, NDH shuttles electrons from NAD(P)H:plastoquinone, via FMN and iron-sulfur (Fe-S) centers, to quinones in the photosynthetic chain and possibly in a chloroplast respiratory chain. The immediate electron acceptor for the enzyme in this species is believed to be plastoquinone. Couples the redox reaction to proton translocation, and thus conserves the redox energy in a proton gradient. The sequence is that of NAD(P)H-quinone oxidoreductase subunit 4L, chloroplastic from Nephroselmis olivacea (Green alga).